Here is a 128-residue protein sequence, read N- to C-terminus: Small ribosomal subunit protein uS13 (128 aa).

Over residues 95 to 118 (GLPVRGQRTHTNARTRKGPKKGLV) the composition is skewed to basic residues. Residues 95 to 128 (GLPVRGQRTHTNARTRKGPKKGLVRKAAAPAPKA) form a disordered region.

The protein belongs to the universal ribosomal protein uS13 family. Part of the 30S ribosomal subunit. Forms a loose heterodimer with protein S19. Forms two bridges to the 50S subunit in the 70S ribosome.

Functionally, located at the top of the head of the 30S subunit, it contacts several helices of the 16S rRNA. In the 70S ribosome it contacts the 23S rRNA (bridge B1a) and protein L5 of the 50S subunit (bridge B1b), connecting the 2 subunits; these bridges are implicated in subunit movement. Contacts the tRNAs in the A and P-sites. This is Small ribosomal subunit protein uS13 from Anaeromyxobacter sp. (strain K).